A 320-amino-acid polypeptide reads, in one-letter code: MIPRFDFPWPSACHPHARQAEQGALAFAERHGLVPTAAYRSRLERTRYGWLAARCYPDADDVLLQLCADYFIWFFIVDDLFVDRVDTLSERTIPNLTAMIDVLDHHRPGAEPVFGEHAWLDVCTRLRAYLSDEHFQRFAHGMRMWAATAGLQIANHLGADTVDVAPYETIRRHTSGTNPCLALADAAKHGPVTPAEYHSPPVQRLVLHANNVVCWSNDVQSLKMELNQPGQYWNMAAIYAHRGLSLQQAVDLVALRVRGEIASFQSLALTLEPHASRPLRGFVDGLRHWMRGYQDWVENDTLRYADAFIAEDADDTAVRT.

Mg(2+) is bound by residues Asp78 and Asp83. The DDXXXD motif motif lies at 78-83 (DDLFVD). Arg171 contacts substrate. Asn217, Ser221, and Glu225 together coordinate Mg(2+).

This sequence belongs to the terpene synthase family. Requires Mg(2+) as cofactor.

The catalysed reaction is (2E,6E)-farnesyl diphosphate + H2O = (+)-corvol ether B + diphosphate. It carries out the reaction (2E,6E)-farnesyl diphosphate + H2O = (+)-corvol ether A + diphosphate. It functions in the pathway secondary metabolite biosynthesis; terpenoid biosynthesis. In terms of biological role, catalyzes the conversion of (2E,6E)-farnesyl diphosphate (FPP) into (+)-corvol ether A and (+)-corvol ether B via a 1,10-cyclization, which requires isomerization of FPP to nerolidyl diphosphate (NPP) and then abstraction of the pyrophosphate from intermediate NPP leading to a (E,Z)-germacradienyl (helminthogermacradienyl) cation. The preferred substrate is (2E,6E)-farnesyl diphosphate (FPP), however geranyl diphosphate (GPP) is also able to produce small amounts of several acyclic and cyclic monoterpenes, with linalool as the main product. In Kitasatospora setae (strain ATCC 33774 / DSM 43861 / JCM 3304 / KCC A-0304 / NBRC 14216 / KM-6054) (Streptomyces setae), this protein is (+)-corvol ether B synthase/(+)-corvol ether A synthase ((2E,6E)-farnesyl diphosphate cyclizing).